A 549-amino-acid chain; its full sequence is Peptide transport periplasmic protein SapA (549 aa).

The N-terminal stretch at 1–21 (MRLVLSSLIVIAGLLSSQATA) is a signal peptide.

The protein belongs to the bacterial solute-binding protein 5 family.

It localises to the periplasm. In terms of biological role, involved in a peptide intake transport system that plays a role in the resistance to antimicrobial peptides. The protein is Peptide transport periplasmic protein SapA of Salmonella typhimurium (strain LT2 / SGSC1412 / ATCC 700720).